Here is a 447-residue protein sequence, read N- to C-terminus: Serine/threonine-protein phosphatase 2A 55 kDa regulatory subunit B delta isoform (447 aa).

WD repeat units follow at residues alanine 26–proline 65, glutamate 91–glutamate 132, alanine 175–asparagine 213, glutamate 224–arginine 264, glutamate 283–glutamate 321, glutamate 338–leucine 379, and aspartate 414–asparagine 447.

Belongs to the phosphatase 2A regulatory subunit B family. PP2A consists of a common heterodimeric core enzyme, composed of a 36 kDa catalytic subunit (subunit C) and a 65 kDa constant regulatory subunit (PR65 or subunit A), that associates with a variety of regulatory subunits. Proteins that associate with the core dimer include three families of regulatory subunits B (the R2/B/PR55/B55, R3/B''/PR72/PR130/PR59 and R5/B'/B56 families), the 48 kDa variable regulatory subunit, viral proteins, and cell signaling molecules. Interacts with ensa (when phosphorylated at 'Ser-67') and arpp19 (when phosphorylated at 'Ser-67'), leading to inhibit PP2A activity.

It localises to the cytoplasm. Its function is as follows. Substrate-recognition subunit of protein phosphatase 2A (PP2A) that plays a key role in cell cycle by controlling mitosis entry and exit. The activity of PP2A complexes containing ppp2r2d (PR55-delta) fluctuate during the cell cycle: the activity is high in interphase and low in mitosis. During mitosis, activity of PP2A is inhibited via interaction with phosphorylated ensa and arpp19 inhibitors. PP2A complexes containing ppp2r2d (PR55-delta) also regulate the activity of TGF-beta/Activin/Nodal signaling by restricting receptor activity. Within the PP2A complexes, the B regulatory subunits modulate substrate selectivity and catalytic activity, and may also direct the localization of the catalytic enzyme to a particular subcellular compartment. This Xenopus tropicalis (Western clawed frog) protein is Serine/threonine-protein phosphatase 2A 55 kDa regulatory subunit B delta isoform (ppp2r2d).